The following is a 108-amino-acid chain: Glutaredoxin-1 (108 aa).

Residues 3–106 enclose the Glutaredoxin domain; it reads EEFVQQRLAN…DILSSIGVLR (104 aa). A disulfide bond links C23 and C26.

This sequence belongs to the glutaredoxin family.

Its subcellular location is the virion. Has thioltransferase and dehydroascorbate reductase activities. In Camelpox virus (strain M-96), this protein is Glutaredoxin-1 (OPG075).